The following is a 75-amino-acid chain: Exodeoxyribonuclease 7 small subunit (75 aa).

This sequence belongs to the XseB family. As to quaternary structure, heterooligomer composed of large and small subunits.

The protein resides in the cytoplasm. The catalysed reaction is Exonucleolytic cleavage in either 5'- to 3'- or 3'- to 5'-direction to yield nucleoside 5'-phosphates.. Bidirectionally degrades single-stranded DNA into large acid-insoluble oligonucleotides, which are then degraded further into small acid-soluble oligonucleotides. This Nostoc punctiforme (strain ATCC 29133 / PCC 73102) protein is Exodeoxyribonuclease 7 small subunit.